The sequence spans 2851 residues: Highly reducing polyketide synthase sthA (2851 aa).

Residues 8–415 form the Ketosynthase family 3 (KS3) domain; that stretch reads NEPIVIIGSG…GTNAHAIVEG (408 aa). The disordered stretch occupies residues 304–324; sequence LDPESPNDRPQYIESHGTGTP. Positions 529-851 are acyl transferase (AT) domain; that stretch reads IFTGQGAQYA…PYHGSLVRGE (323 aa). Positions 926–1059 are N-terminal hotdog fold; that stretch reads HQLLGNVSPD…GELNILLVDD (134 aa). A PKS/mFAS DH domain is found at 926–1235; it reads HQLLGNVSPD…FKPVGSDAKD (310 aa). Positions 949–1242 are dehydratase (DH) domain; the sequence is PKEMTWLEGH…AKDDRNVFYK (294 aa). H958 (proton acceptor; for dehydratase activity) is an active-site residue. Residues 1076–1235 are C-terminal hotdog fold; the sequence is MIPVQPSRLY…FKPVGSDAKD (160 aa). Catalysis depends on D1137, which acts as the Proton donor; for dehydratase activity. The methyltransferase (MT) domain stretch occupies residues 1390–1577; it reads QCTLWVAGVL…GIDTMSPPEL (188 aa). A ketoreductase (KR)domain region spans residues 2079 to 2252; sequence TYWLVGLSGA…RSSVVNVGAI (174 aa). The Carrier domain occupies 2360–2443; that stretch reads ADITKVVQQA…DLAAESIPAE (84 aa). S2399 is subject to O-(pantetheine 4'-phosphoryl)serine. Residues 2447 to 2496 form a disordered region; sequence HVQQQQQQAGRQDASSNTSSDDETASTLPTSPESASPGTSTPVPEKDISP. Residues 2455 to 2488 show a composition bias toward polar residues; sequence AGRQDASSNTSSDDETASTLPTSPESASPGTSTP. The segment at 2535–2767 is reductase (R) domain; sequence LTGCSGLLGH…DLVSVDTCCS (233 aa).

It depends on pantetheine 4'-phosphate as a cofactor.

It carries out the reaction 7 malonyl-CoA + acetyl-CoA + 10 AH2 + 5 S-adenosyl-L-methionine + 2 H(+) = dehydroprobetaenone I + 10 A + 5 S-adenosyl-L-homocysteine + 7 CO2 + 8 CoA + 6 H2O. It participates in mycotoxin biosynthesis. Functionally, highly reducing polyketide synthase; part of the gene cluster that mediates the biosynthesis of the phytotoxin stemphyloxin II. The first step of the pathway is the synthesis of dehydroprobetaenone I by the polyketide synthase sthA and the enoyl reductase sthE via condensation of one acetyl-CoA starter unit with 7 malonyl-CoA units and 5 methylations. The C-terminal reductase (R) domain of sthA catalyzes the reductive release of the polyketide chain. Because sthA lacks a designated enoylreductase (ER) domain, the required activity is provided the enoyl reductase sthE. The short-chain dehydrogenase/reductase sthC then catalyzes reduction of dehydroprobetaenone I to probetaenone I. The cytochrome P450 monooxygenase sthF catalyzes successive epoxidation, oxidation (resulting from epoxide opening) and hydroxylation to install a tertiary alcohol in the decaline ring to yield betaenone C from dehydroprobetaenone I and betaenone B from probetaenone I. The FAD-linked oxidoreductase sthB is responsible for the conversion of betaenone C to betaenone A via an intramolecular aldol reaction between C-1 and C-17 to form the bridged tricyclic system in betaenone A. Finally, the cytochrome P450 monooxygenase sthD catalyzes the hydroxylation of C-15 to afford the final metabolite stemphyloxin II. The protein is Highly reducing polyketide synthase sthA of Phaeosphaeria nodorum (strain SN15 / ATCC MYA-4574 / FGSC 10173) (Glume blotch fungus).